We begin with the raw amino-acid sequence, 302 residues long: Nucleotide-binding protein Rsph17029_0317 (302 aa).

15 to 22 (GPSGAGRT) provides a ligand contact to ATP. 62–65 (DVRN) contacts GTP.

The protein belongs to the RapZ-like family.

Displays ATPase and GTPase activities. In Cereibacter sphaeroides (strain ATCC 17029 / ATH 2.4.9) (Rhodobacter sphaeroides), this protein is Nucleotide-binding protein Rsph17029_0317.